The chain runs to 422 residues: Golgi-associated RAB2 interactor protein 2 (422 aa).

Positions 353-404 (PVESEANTSKEMKDKTSEEKMPDFQSTALKAEESRSLRTESNTSVLSPHIKS) are disordered. Over residues 360–374 (TSKEMKDKTSEEKMP) the composition is skewed to basic and acidic residues.

This sequence belongs to the GARIN family. In terms of assembly, interacts with CALM1. As to expression, expressed in spermatozoa (at protein level).

It localises to the cell projection. It is found in the cilium. Its subcellular location is the flagellum. In terms of biological role, seems to play a role in sperm motility. This is Golgi-associated RAB2 interactor protein 2 from Homo sapiens (Human).